Here is a 980-residue protein sequence, read N- to C-terminus: Ankycorbin (980 aa).

An N-acetylmethionine modification is found at M1. A Phosphoserine modification is found at S11. ANK repeat units follow at residues 18 to 51 (KNDD…KHDS), 52 to 81 (EGKT…DVTA), 85 to 114 (TGHS…PAES), 118 to 147 (SGKT…PINL), 151 to 180 (DGNI…DVNS), 184 to 213 (SGRT…DLNL), and 217 to 247 (LGYN…DADL). Basic and acidic residues predominate over residues 247–259 (LKTPTKPKQHDQV). Positions 247 to 301 (LKTPTKPKQHDQVSKISSERSGTPKKRKAPPPPISPTQLSDVSSPRSITSTPLSG) are disordered. T249 bears the Phosphothreonine mark. Positions 270–276 (PKKRKAP) match the Nuclear localization signal motif. Phosphoserine is present on residues S281, S286, and S293. Over residues 282–299 (PTQLSDVSSPRSITSTPL) the composition is skewed to polar residues. A phosphothreonine mark is found at T295 and T297. Phosphoserine occurs at positions 300, 304, 318, 327, 329, 340, 341, 350, 358, 419, 512, 515, 667, and 915. Residues 349–374 (LSLLQAKVASLTLHNKELQDKLQAKS) are a coiled coil. Positions 387–423 (YHSTQTDLGPSLGKPGETSPPDSKSSPSVLIHSLGKS) are disordered. A coiled-coil region spans residues 425–947 (TDNDVRIQQL…QHQEVISVYR (523 aa)).

Interacts with PALLD. Associates with actin. However, does not bind F-actin directly. As to expression, highly expressed in placenta, muscle, kidney and testis. Moderately expressed in heart, brain, lung, liver and intestine. Isoform 2 is widely expressed and expressed in fetal and adult testes, and spermatozoa.

It is found in the cytoplasm. The protein localises to the cytoskeleton. The protein resides in the stress fiber. Its subcellular location is the cell cortex. It localises to the cell junction. It is found in the nucleus. Plays a role in actin regulation at the ectoplasmic specialization, a type of cell junction specific to testis. Important for establishment of sperm polarity and normal spermatid adhesion. May also promote integrity of Sertoli cell tight junctions at the blood-testis barrier. This is Ankycorbin (RAI14) from Homo sapiens (Human).